Reading from the N-terminus, the 394-residue chain is F-box/kelch-repeat protein At1g23390 (394 aa).

Residues 15–62 (EEESSIDGDILESILSYLPLLDLDSACQVSKSWNRAVFYSLRRLKTMP) enclose the F-box domain. 4 Kelch repeats span residues 65–111 (FVYN…RSSH), 155–204 (SLII…TWLS), 206–252 (AVSS…SIGF), and 321–369 (MVYV…VIVA).

The polypeptide is F-box/kelch-repeat protein At1g23390 (Arabidopsis thaliana (Mouse-ear cress)).